Reading from the N-terminus, the 251-residue chain is Aspartate/glutamate leucyltransferase (251 aa).

The protein belongs to the R-transferase family. Bpt subfamily.

It localises to the cytoplasm. It catalyses the reaction N-terminal L-glutamyl-[protein] + L-leucyl-tRNA(Leu) = N-terminal L-leucyl-L-glutamyl-[protein] + tRNA(Leu) + H(+). It carries out the reaction N-terminal L-aspartyl-[protein] + L-leucyl-tRNA(Leu) = N-terminal L-leucyl-L-aspartyl-[protein] + tRNA(Leu) + H(+). In terms of biological role, functions in the N-end rule pathway of protein degradation where it conjugates Leu from its aminoacyl-tRNA to the N-termini of proteins containing an N-terminal aspartate or glutamate. This Nitrosospira multiformis (strain ATCC 25196 / NCIMB 11849 / C 71) protein is Aspartate/glutamate leucyltransferase.